A 166-amino-acid chain; its full sequence is uncharacterized protein (166 aa).

This is an uncharacterized protein from Xestia (XnGV).